Reading from the N-terminus, the 372-residue chain is NAD(P)H-quinone oxidoreductase subunit 1 (372 aa).

9 consecutive transmembrane segments (helical) span residues 27–47 (AIWM…GVLV), 65–85 (PEYI…KLVF), 97–117 (WLFT…YLIV), 128–148 (IGTG…GLLM), 166–186 (AAQS…IVMM), 204–224 (ILGW…IAAL), 266–286 (VLSA…PIPI), 308–328 (ALGI…AILL), and 347–367 (FLLP…LAFP).

This sequence belongs to the complex I subunit 1 family. NDH-1 is composed of at least 11 different subunits.

The protein resides in the cellular thylakoid membrane. It catalyses the reaction a plastoquinone + NADH + (n+1) H(+)(in) = a plastoquinol + NAD(+) + n H(+)(out). It carries out the reaction a plastoquinone + NADPH + (n+1) H(+)(in) = a plastoquinol + NADP(+) + n H(+)(out). In terms of biological role, NDH-1 shuttles electrons from an unknown electron donor, via FMN and iron-sulfur (Fe-S) centers, to quinones in the respiratory and/or the photosynthetic chain. The immediate electron acceptor for the enzyme in this species is believed to be plastoquinone. Couples the redox reaction to proton translocation, and thus conserves the redox energy in a proton gradient. The protein is NAD(P)H-quinone oxidoreductase subunit 1 of Trichormus variabilis (strain ATCC 29413 / PCC 7937) (Anabaena variabilis).